A 163-amino-acid chain; its full sequence is Urease accessory protein UreE (163 aa).

This sequence belongs to the UreE family.

It localises to the cytoplasm. Functionally, involved in urease metallocenter assembly. Binds nickel. Probably functions as a nickel donor during metallocenter assembly. This is Urease accessory protein UreE from Actinomyces naeslundii.